The sequence spans 209 residues: Translation initiation factor IF-3 (209 aa).

It belongs to the IF-3 family. Monomer.

It is found in the cytoplasm. IF-3 binds to the 30S ribosomal subunit and shifts the equilibrium between 70S ribosomes and their 50S and 30S subunits in favor of the free subunits, thus enhancing the availability of 30S subunits on which protein synthesis initiation begins. The protein is Translation initiation factor IF-3 of Chlorobium phaeobacteroides (strain DSM 266 / SMG 266 / 2430).